The chain runs to 203 residues: Glutathione-specific gamma-glutamylcyclotransferase (203 aa).

Residue 12–17 (VFGYGS) coordinates substrate. Residue glutamate 105 is the Proton acceptor of the active site.

It belongs to the gamma-glutamylcyclotransferase family. ChaC subfamily.

It is found in the cytoplasm. The protein resides in the nucleus. The catalysed reaction is glutathione = L-cysteinylglycine + 5-oxo-L-proline. Gamma-glutamylcyclotransferase acting specifically on glutathione, but not on other gamma-glutamyl peptides. Allows utilization of gluthathione through subsequent cleavage of the Cys-Gly dipeptide by Cys-Gly metallodipeptidase dug1. This is Glutathione-specific gamma-glutamylcyclotransferase from Schizosaccharomyces pombe (strain 972 / ATCC 24843) (Fission yeast).